Reading from the N-terminus, the 151-residue chain is High mobility group B protein 14 (151 aa).

Disordered regions lie at residues 1 to 62 (MTKR…QTKM) and 132 to 151 (TKRM…DYSE). Residues 7-20 (KSGPLSPSCSGGSS) show a composition bias toward low complexity. The span at 35–56 (RSTRLRLQPLRKPKTSPKKKPV) shows a compositional bias: basic residues. Positions 63 to 132 (PKKPATAFFF…EFHRAMTEYT (70 aa)) form a DNA-binding region, HMG box. Residues 132 to 142 (TKRMESGAHDE) are compositionally biased toward basic and acidic residues. Residue Ser150 is modified to Phosphoserine.

The protein belongs to the HMGB family.

The protein resides in the nucleus. The polypeptide is High mobility group B protein 14 (HMGB14) (Arabidopsis thaliana (Mouse-ear cress)).